We begin with the raw amino-acid sequence, 313 residues long: D-alanine--D-alanine ligase (313 aa).

An ATP-grasp domain is found at 108–308 (KLVWQQTGVP…YSELVVKVLA (201 aa)). 138–193 (VAKLGLPLFVKPASEGSSVAVLKVKTADALPAALSEAATHDKIVIVEKSIEGGGEY) contacts ATP. Mg(2+)-binding residues include D262, E275, and N277.

The protein belongs to the D-alanine--D-alanine ligase family. Requires Mg(2+) as cofactor. Mn(2+) serves as cofactor.

The protein resides in the cytoplasm. The enzyme catalyses 2 D-alanine + ATP = D-alanyl-D-alanine + ADP + phosphate + H(+). It participates in cell wall biogenesis; peptidoglycan biosynthesis. Its function is as follows. Cell wall formation. In Burkholderia ambifaria (strain ATCC BAA-244 / DSM 16087 / CCUG 44356 / LMG 19182 / AMMD) (Burkholderia cepacia (strain AMMD)), this protein is D-alanine--D-alanine ligase.